The following is a 428-amino-acid chain: GTPase Obg (428 aa).

Residues Met-1 to Leu-158 form the Obg domain. A disordered region spans residues Ala-117 to Pro-145. The 171-residue stretch at Ala-159–Glu-329 folds into the OBG-type G domain. GTP-binding positions include Gly-165–Ser-172, Phe-190–Val-194, Asp-212–Gly-215, Asn-282–Asp-285, and Ser-310–Val-312. Mg(2+)-binding residues include Ser-172 and Thr-192. In terms of domain architecture, OCT spans Lys-350–Asp-428.

Belongs to the TRAFAC class OBG-HflX-like GTPase superfamily. OBG GTPase family. As to quaternary structure, monomer. The cofactor is Mg(2+).

It localises to the cytoplasm. In terms of biological role, an essential GTPase which binds GTP, GDP and possibly (p)ppGpp with moderate affinity, with high nucleotide exchange rates and a fairly low GTP hydrolysis rate. Plays a role in control of the cell cycle, stress response, ribosome biogenesis and in those bacteria that undergo differentiation, in morphogenesis control. The chain is GTPase Obg from Bacillus cereus (strain ATCC 10987 / NRS 248).